The primary structure comprises 786 residues: MLERTLRVLEYNKVKEQLLEHTASSLGRDKVKNLVPSTDFEEIVEMQDTTDEAAKVIRLKGSAPLGGITDIRSNVKRAKIGSMLSPNELLDIANTMYGSRNMKRFIEDMVDNGVELPILATHVAQIVSLYDLEKKITNCIGDGGEVVDSASDKLRGIRTQIRTAESRIREKLENMTRSSNAQKMLSDSIVTIRNERYVIPVKQEYRGVYGGIVHDQSASGQTLFIEPQVIVELNNALQEARVKEKQEIERILLMLTEEVAVEADIVLSNVEVVANLDFIFAKAFYAKRIKATKPIVNNERYMDLKQARHPLIDPEIIVPNNIMLGKDFTTIVITGPNTGGKTVTLKTVGICVLMAQSGLHIPVMDESEICVFKNIFADIGDEQSIEQSLSTFSSHMVNIVDILEKADFESLVLFDELGAGTDPQEGAALAISILDEVCNRGARVVATTHYPELKAYGYNREQVINASVEFDVNTLSPTYKLLIGVPGRSNAFEISKRLGLSDRVIEQARNHISTDTNKIENMIAKLEESQKNAERDWNEAEALRKQSEKLHRELQRQIIEFNEERDERLLKAQKEGEEKVEAAKKEAEGIIQELRQLRKAQLANVKDHELIEAKSRLEGAAPELVKKQKVNVKNTAPKQQLRAGDEVKVLTFGQKGQLLEKVSDTEWSVQIGILKMKVKESNMEYINTPKQTEKKAVATVKGRDYHVSLELDLRGERFENAMARVEKYLDDAQLASYPRVSIIHGKGTGALRQGVQDYLKKHRGVKTFRYGDMGEGGLGVTVVELK.

G335–T342 lines the ATP pocket. Positions L711 to K786 constitute a Smr domain.

The protein belongs to the DNA mismatch repair MutS family. MutS2 subfamily. As to quaternary structure, homodimer. Binds to stalled ribosomes, contacting rRNA.

Its function is as follows. Endonuclease that is involved in the suppression of homologous recombination and thus may have a key role in the control of bacterial genetic diversity. In terms of biological role, acts as a ribosome collision sensor, splitting the ribosome into its 2 subunits. Detects stalled/collided 70S ribosomes which it binds and splits by an ATP-hydrolysis driven conformational change. Acts upstream of the ribosome quality control system (RQC), a ribosome-associated complex that mediates the extraction of incompletely synthesized nascent chains from stalled ribosomes and their subsequent degradation. Probably generates substrates for RQC. In Bacillus cereus (strain Q1), this protein is Endonuclease MutS2.